A 665-amino-acid polypeptide reads, in one-letter code: Fructose-1,6-bisphosphatase class 3 (665 aa).

It belongs to the FBPase class 3 family. Requires Mn(2+) as cofactor.

The enzyme catalyses beta-D-fructose 1,6-bisphosphate + H2O = beta-D-fructose 6-phosphate + phosphate. Its pathway is carbohydrate biosynthesis; gluconeogenesis. This Alkaliphilus metalliredigens (strain QYMF) protein is Fructose-1,6-bisphosphatase class 3.